The following is a 460-amino-acid chain: Spermatogenesis-defective protein 39 homolog (460 aa).

Phosphothreonine is present on Thr21. A disordered region spans residues 70 to 101; that stretch reads SIKETAGSSGSTSEGREQMKGRNSFYTQLPKP. Positions 73 to 82 are enriched in low complexity; it reads ETAGSSGSTS. Thr115 carries the phosphothreonine modification. Phosphoserine is present on residues Ser119, Ser122, and Ser128. Polar residues predominate over residues 121–133; that stretch reads QSLSDALSDTPAK. Residues 121-141 form a disordered region; it reads QSLSDALSDTPAKTYSPELGR. Phosphothreonine is present on Thr130.

This sequence belongs to the SPE39 family. As to quaternary structure, interacts with VPS33B. Associates with the homotypic fusion and vacuole protein sorting (HOPS) complex; impaired by VPS33B. Interacts with RAB11A.

It is found in the cytoplasm. The protein localises to the cytoplasmic vesicle. It localises to the early endosome. The protein resides in the recycling endosome. Its subcellular location is the late endosome. Proposed to be involved in endosomal maturation implicating in part VPS33B. In epithelial cells, the VPS33B:VIPAS39 complex may play a role in the apical RAB11A-dependent recycling pathway and in the maintenance of the apical-basolateral polarity. May play a role in lysosomal trafficking, probably via association with the core HOPS complex in a discrete population of endosomes; the functions seems to be independent of VPS33B. May play a role in vesicular trafficking during spermatogenesis. May be involved in direct or indirect transcriptional regulation of E-cadherin. The polypeptide is Spermatogenesis-defective protein 39 homolog (Vipas39) (Rattus norvegicus (Rat)).